We begin with the raw amino-acid sequence, 540 residues long: Ribonuclease Y (540 aa).

The helical transmembrane segment at 4-24 (TILVPVAVAIVSVLVGGCAGY) threads the bilayer. The region spanning 230-293 (TVSVVNLPSD…EIAKRALERL (64 aa)) is the KH domain. An HD domain is found at 356-449 (VLSHSIEVGK…VVAADTISSA (94 aa)).

The protein belongs to the RNase Y family.

It is found in the cell membrane. Endoribonuclease that initiates mRNA decay. This chain is Ribonuclease Y, found in Lactobacillus johnsonii (strain CNCM I-12250 / La1 / NCC 533).